The chain runs to 276 residues: Hydroxymethylpyrimidine/phosphomethylpyrimidine kinase (276 aa).

Gln45 is a binding site for 4-amino-5-hydroxymethyl-2-methylpyrimidine.

Belongs to the ThiD family.

The enzyme catalyses 4-amino-5-hydroxymethyl-2-methylpyrimidine + ATP = 4-amino-2-methyl-5-(phosphooxymethyl)pyrimidine + ADP + H(+). It carries out the reaction 4-amino-2-methyl-5-(phosphooxymethyl)pyrimidine + ATP = 4-amino-2-methyl-5-(diphosphooxymethyl)pyrimidine + ADP. It participates in cofactor biosynthesis; thiamine diphosphate biosynthesis; 4-amino-2-methyl-5-diphosphomethylpyrimidine from 5-amino-1-(5-phospho-D-ribosyl)imidazole: step 2/3. Its pathway is cofactor biosynthesis; thiamine diphosphate biosynthesis; 4-amino-2-methyl-5-diphosphomethylpyrimidine from 5-amino-1-(5-phospho-D-ribosyl)imidazole: step 3/3. Catalyzes the phosphorylation of hydroxymethylpyrimidine phosphate (HMP-P) to HMP-PP, and of HMP to HMP-P. This is Hydroxymethylpyrimidine/phosphomethylpyrimidine kinase (thiD) from Staphylococcus aureus (strain MRSA252).